A 479-amino-acid polypeptide reads, in one-letter code: Adenosylhomocysteinase (479 aa).

3 residues coordinate substrate: Thr66, Asp142, and Glu203. 204 to 206 (TTT) contacts NAD(+). Lys233 and Asp237 together coordinate substrate. Residues Asn238, 267–272 (GYGDVG), Glu290, Asn325, 346–348 (IGH), and Asn394 each bind NAD(+).

This sequence belongs to the adenosylhomocysteinase family. NAD(+) serves as cofactor.

The protein localises to the cytoplasm. The catalysed reaction is S-adenosyl-L-homocysteine + H2O = L-homocysteine + adenosine. Its pathway is amino-acid biosynthesis; L-homocysteine biosynthesis; L-homocysteine from S-adenosyl-L-homocysteine: step 1/1. Functionally, may play a key role in the regulation of the intracellular concentration of adenosylhomocysteine. The sequence is that of Adenosylhomocysteinase from Nitratidesulfovibrio vulgaris (strain ATCC 29579 / DSM 644 / CCUG 34227 / NCIMB 8303 / VKM B-1760 / Hildenborough) (Desulfovibrio vulgaris).